The chain runs to 604 residues: Aspartate--tRNA(Asp/Asn) ligase (604 aa).

Glu175 provides a ligand contact to L-aspartate. Residues 199–202 (QQFK) form an aspartate region. L-aspartate-binding residues include Arg221 and His456. Position 221 to 223 (221 to 223 (RDE)) interacts with ATP. An ATP-binding site is contributed by Glu496. Arg503 serves as a coordination point for L-aspartate. 548–551 (GVDR) contributes to the ATP binding site.

Belongs to the class-II aminoacyl-tRNA synthetase family. Type 1 subfamily. In terms of assembly, homodimer.

Its subcellular location is the cytoplasm. It catalyses the reaction tRNA(Asx) + L-aspartate + ATP = L-aspartyl-tRNA(Asx) + AMP + diphosphate. Functionally, aspartyl-tRNA synthetase with relaxed tRNA specificity since it is able to aspartylate not only its cognate tRNA(Asp) but also tRNA(Asn). Reaction proceeds in two steps: L-aspartate is first activated by ATP to form Asp-AMP and then transferred to the acceptor end of tRNA(Asp/Asn). The sequence is that of Aspartate--tRNA(Asp/Asn) ligase from Methylobacterium nodulans (strain LMG 21967 / CNCM I-2342 / ORS 2060).